A 508-amino-acid polypeptide reads, in one-letter code: Mevalonate kinase ERG12 (508 aa).

Residues 1 to 46 form a disordered region; it reads MPPSNPAMVNGLNGSHANGNGNGHNHISDSGSETSGESSNGSGRRR. Low complexity predominate over residues 10–42; that stretch reads NGLNGSHANGNGNGHNHISDSGSETSGESSNGS. Residues Lys68, Ser200, and 205–211 each bind ATP; that span reads GAGLGSS. The Mg(2+) site is built by Ser211 and Glu256. Asp267 functions as the Proton acceptor in the catalytic mechanism.

This sequence belongs to the GHMP kinase family. Mevalonate kinase subfamily. As to quaternary structure, homodimer. Mg(2+) is required as a cofactor.

It is found in the cytoplasm. The protein resides in the cytosol. It carries out the reaction (R)-mevalonate + ATP = (R)-5-phosphomevalonate + ADP + H(+). Its pathway is isoprenoid biosynthesis; isopentenyl diphosphate biosynthesis via mevalonate pathway; isopentenyl diphosphate from (R)-mevalonate: step 1/3. Functionally, mevalonate kinase; part of the second module of ergosterol biosynthesis pathway that includes the middle steps of the pathway. ERG12 converts mevalonate into 5-phosphomevalonate. The second module is carried out in the vacuole and involves the formation of farnesyl diphosphate, which is also an important intermediate in the biosynthesis of ubiquinone, dolichol, heme and prenylated proteins. Activity by the mevalonate kinase ERG12 (FG05912) first converts mevalonate into 5-phosphomevalonate. 5-phosphomevalonate is then further converted to 5-diphosphomevalonate by the phosphomevalonate kinase ERG8 (FG09764). The diphosphomevalonate decarboxylase ERG19 (FG10424) then produces isopentenyl diphosphate. The isopentenyl-diphosphate delta-isomerase IDI1 (FG09722) then catalyzes the 1,3-allylic rearrangement of the homoallylic substrate isopentenyl (IPP) to its highly electrophilic allylic isomer, dimethylallyl diphosphate (DMAPP). Finally the farnesyl diphosphate synthase ERG20 (FG06784) catalyzes the sequential condensation of isopentenyl pyrophosphate with dimethylallyl pyrophosphate, and then with the resultant geranylpyrophosphate to the ultimate product farnesyl pyrophosphate. The chain is Mevalonate kinase ERG12 from Gibberella zeae (strain ATCC MYA-4620 / CBS 123657 / FGSC 9075 / NRRL 31084 / PH-1) (Wheat head blight fungus).